A 312-amino-acid chain; its full sequence is tRNA uridine(34) hydroxylase (312 aa).

The Rhodanese domain maps to 123 to 216 (DRDDVVVLDV…YGIEQGGEDF (94 aa)). Cys176 acts as the Cysteine persulfide intermediate in catalysis.

The protein belongs to the TrhO family.

It catalyses the reaction uridine(34) in tRNA + AH2 + O2 = 5-hydroxyuridine(34) in tRNA + A + H2O. Its function is as follows. Catalyzes oxygen-dependent 5-hydroxyuridine (ho5U) modification at position 34 in tRNAs. The polypeptide is tRNA uridine(34) hydroxylase (Cytophaga hutchinsonii (strain ATCC 33406 / DSM 1761 / CIP 103989 / NBRC 15051 / NCIMB 9469 / D465)).